The following is a 541-amino-acid chain: Chaperonin GroEL (541 aa).

ATP contacts are provided by residues T29–P32, D86–T90, G413, D477–L479, and D493.

Belongs to the chaperonin (HSP60) family. As to quaternary structure, forms a cylinder of 14 subunits composed of two heptameric rings stacked back-to-back. Interacts with the co-chaperonin GroES.

Its subcellular location is the cytoplasm. It carries out the reaction ATP + H2O + a folded polypeptide = ADP + phosphate + an unfolded polypeptide.. In terms of biological role, together with its co-chaperonin GroES, plays an essential role in assisting protein folding. The GroEL-GroES system forms a nano-cage that allows encapsulation of the non-native substrate proteins and provides a physical environment optimized to promote and accelerate protein folding. In Clostridium beijerinckii (strain ATCC 51743 / NCIMB 8052) (Clostridium acetobutylicum), this protein is Chaperonin GroEL.